The sequence spans 1457 residues: Ras guanine nucleotide exchange factor C (1457 aa).

An RCC1 1 repeat occupies Met-1–Asp-55. Disordered regions lie at residues Phe-75 to Asn-196, His-209 to Lys-264, Glu-282 to Pro-313, and Gln-376 to Thr-404. Composition is skewed to low complexity over residues Thr-83–Asn-121 and Ser-134–Thr-158. Basic and acidic residues-rich tracts occupy residues Ile-171 to Gln-188 and His-209 to Glu-224. Over residues Asn-225–Asp-237 the composition is skewed to acidic residues. The segment covering Ser-238 to Ser-249 has biased composition (basic and acidic residues). 2 stretches are compositionally biased toward low complexity: residues Gln-283 to Gln-292 and Gln-376 to Gln-403. 4 RCC1 repeats span residues Gly-351–Ser-401, Trp-432–Glu-483, Gly-485–Gln-549, and Ser-590–Glu-647. The DH domain occupies Pro-650–Asn-971. Positions Leu-703–Pro-715 are enriched in low complexity. The tract at residues Leu-703 to Ile-762 is disordered. A compositionally biased stretch (basic and acidic residues) spans Asn-724–Gly-738. Low complexity predominate over residues His-739 to Ile-762. An N-terminal Ras-GEF domain is found at Gly-989–Phe-1109. Residues Leu-1127 to Thr-1210 are disordered. Residues Leu-1138–Asn-1211 adopt a coiled-coil conformation. The span at Asn-1142–Thr-1210 shows a compositional bias: low complexity. Residues Gln-1232–Ser-1454 enclose the Ras-GEF domain.

Promotes the exchange of Ras-bound GDP by GTP. In Dictyostelium discoideum (Social amoeba), this protein is Ras guanine nucleotide exchange factor C (gefC).